We begin with the raw amino-acid sequence, 375 residues long: Tyrosine--tRNA ligase (375 aa).

The L-tyrosine site is built by tyrosine 37, tyrosine 168, glutamine 172, aspartate 175, and glutamine 190. A 'KMSKS' region motif is present at residues 251–255 (KMSKS). Lysine 254 is an ATP binding site.

It belongs to the class-I aminoacyl-tRNA synthetase family. TyrS type 4 subfamily. In terms of assembly, homodimer.

The protein localises to the cytoplasm. It carries out the reaction tRNA(Tyr) + L-tyrosine + ATP = L-tyrosyl-tRNA(Tyr) + AMP + diphosphate + H(+). Catalyzes the attachment of tyrosine to tRNA(Tyr) in a two-step reaction: tyrosine is first activated by ATP to form Tyr-AMP and then transferred to the acceptor end of tRNA(Tyr). In Pyrococcus abyssi (strain GE5 / Orsay), this protein is Tyrosine--tRNA ligase.